The primary structure comprises 205 residues: Adenylyl-sulfate kinase (205 aa).

31–38 (GLSGAGKS) is a binding site for ATP. Ser-105 acts as the Phosphoserine intermediate in catalysis.

Belongs to the APS kinase family.

It catalyses the reaction adenosine 5'-phosphosulfate + ATP = 3'-phosphoadenylyl sulfate + ADP + H(+). It functions in the pathway sulfur metabolism; hydrogen sulfide biosynthesis; sulfite from sulfate: step 2/3. In terms of biological role, catalyzes the synthesis of activated sulfate. The sequence is that of Adenylyl-sulfate kinase from Shewanella sp. (strain MR-7).